A 393-amino-acid chain; its full sequence is Bone morphogenetic protein 2 (393 aa).

The N-terminal stretch at 1 to 19 (MVAGTRCLLVLLLPQVLLG) is a signal peptide. Positions 20–279 (GAAGLIPELG…GHPLHKREKR (260 aa)) are cleaved as a propeptide — cleaved by PCSK5. Ser-85 is subject to Phosphoserine. Residues Asn-133, Asn-161, and Asn-197 are each glycosylated (N-linked (GlcNAc...) asparagine). The disordered stretch occupies residues 268 to 290 (GKGHPLHKREKRQAKHKQRKRLK). Residues 271–290 (HPLHKREKRQAKHKQRKRLK) show a composition bias toward basic residues. 3 cysteine pairs are disulfide-bonded: Cys-293–Cys-358, Cys-322–Cys-390, and Cys-326–Cys-392. Residue Asn-335 is glycosylated (N-linked (GlcNAc...) asparagine).

The protein belongs to the TGF-beta family. In terms of assembly, homodimer; disulfide-linked. Interacts with SOSTDC1. Interacts with GREM2, RGMA, RGMB and RGMC. Interacts with ASPN. Interacts with MAFP5. Interacts with FBN1 (via N-terminal domain) and FBN2. Interacts with type I receptor BMPR1A. Interacts with type II receptor BMPR2. Interacts with SCUBE3. Interacts with TNFAIP6 (primarily via Link domain); this interaction is inhibited by hyaluronan. Interacts with ERFE. Interacts with BMPR1A/ALK3; the interaction may induce HAMP expression. Forms heterodimers with BMP6 in vitro; the heterodimer then binds to its receptor BMPR1A /ALK3 and may induce HAMP expression. Interacts with TGFBR3. As to expression, expressed in femur, calvaria, trachea, lung and ovary.

The protein localises to the secreted. Growth factor of the TGF-beta superfamily that plays essential roles in many developmental processes, including cardiogenesis, neurogenesis, and osteogenesis. Induces cartilage and bone formation. Initiates the canonical BMP signaling cascade by associating with type I receptor BMPR1A and type II receptor BMPR2. Once all three components are bound together in a complex at the cell surface, BMPR2 phosphorylates and activates BMPR1A. In turn, BMPR1A propagates signal by phosphorylating SMAD1/5/8 that travel to the nucleus and act as activators and repressors of transcription of target genes. Also acts to promote expression of HAMP, via the interaction with its receptor BMPR1A/ALK3. Can also signal through non-canonical pathways such as ERK/MAP kinase signaling cascade that regulates osteoblast differentiation. Also stimulates the differentiation of myoblasts into osteoblasts via the EIF2AK3-EIF2A-ATF4 pathway by stimulating EIF2A phosphorylation which leads to increased expression of ATF4 which plays a central role in osteoblast differentiation. Acts as a positive regulator of odontoblast differentiation during mesenchymal tooth germ formation, expression is repressed during the bell stage by MSX1-mediated inhibition of CTNNB1 signaling. This chain is Bone morphogenetic protein 2 (Bmp2), found in Rattus norvegicus (Rat).